The chain runs to 344 residues: Nuclear distribution protein nudE-like 1-B (344 aa).

A coiled-coil region spans residues 26–189; sequence YKKSCHDAQE…ELAVRERTSD (164 aa).

The protein belongs to the nudE family. Phosphorylated in mitosis.

The protein localises to the cytoplasm. The protein resides in the cytoskeleton. It localises to the microtubule organizing center. Its subcellular location is the centrosome. It is found in the spindle. Functionally, required for organization of the cellular microtubule array and microtubule anchoring at the centrosome. Positively regulates the activity of the minus-end directed microtubule motor protein dynein. May enhance dynein-mediated microtubule sliding by targeting dynein to the microtubule plus end. In Danio rerio (Zebrafish), this protein is Nuclear distribution protein nudE-like 1-B (ndel1b).